An 874-amino-acid polypeptide reads, in one-letter code: Tyrosine-protein kinase receptor TYRO3 (874 aa).

Residues 1–20 (MEVSLCILLFLLHFNEGIHG) form the signal peptide. Ig-like C2-type domains are found at residues 21-106 (VRFT…IISS) and 117-198 (PHFG…GTVH). The Extracellular portion of the chain corresponds to 21-411 (VRFTQKPFHQ…QAQTQRGHMW (391 aa)). A disulfide bridge connects residues C42 and C95. 6 N-linked (GlcNAc...) asparagine glycosylation sites follow: N135, N174, N217, N270, N305, and N373. C138 and C181 are joined by a disulfide. Fibronectin type-III domains lie at 202–297 (RPDS…TPQA) and 299–403 (PSAA…AMQA). The chain crosses the membrane as a helical span at residues 412-432 (VGLLFGLLVATMVGLLLIVLI). The Cytoplasmic portion of the chain corresponds to 433–874 (RNRGKETQFG…EEEEDVIINV (442 aa)). One can recognise a Protein kinase domain in the interval 497–768 (LTLGRMLGKG…QHLIDQLELL (272 aa)). Residues 503–511 (LGKGEFGSV) and K529 contribute to the ATP site. D634 functions as the Proton acceptor in the catalytic mechanism. Y665 is modified (phosphotyrosine; by autocatalysis).

The protein belongs to the protein kinase superfamily. Tyr protein kinase family. AXL/UFO subfamily.

Its subcellular location is the cell membrane. The catalysed reaction is L-tyrosyl-[protein] + ATP = O-phospho-L-tyrosyl-[protein] + ADP + H(+). Its function is as follows. May be involved in cell adhesion processes, particularly in the central nervous system. This Danio rerio (Zebrafish) protein is Tyrosine-protein kinase receptor TYRO3 (tyro3).